The chain runs to 688 residues: Glycine--tRNA ligase beta subunit (688 aa).

It belongs to the class-II aminoacyl-tRNA synthetase family. As to quaternary structure, tetramer of two alpha and two beta subunits.

It localises to the cytoplasm. It carries out the reaction tRNA(Gly) + glycine + ATP = glycyl-tRNA(Gly) + AMP + diphosphate. This is Glycine--tRNA ligase beta subunit from Histophilus somni (strain 2336) (Haemophilus somnus).